Reading from the N-terminus, the 348-residue chain is MGPRARPALLLLMLLQTAVLQGRLLRSHSLHYLFMGASEQDLGLSLFEALGYVDDQLFVFYDHESRRVEPRTPWVSSRISSQMWLQLSQSLKGWDHMFTVDFWTIMENHNHSKESHTLQVILGCEMQEDNSTEGYWKYGYDGQDHLEFCPDTLDWRAAEPRAWPTKLEWERHKIRARQNRAYLERDCPAQLQQLLELGRGVLDQQVPPLVKVTHHVTSSVTTLRCRALNYYPQNITMKWLKDKQPMDAKEFEPKDVLPNGDGTYQGWITLAVPPGEEQRYTCQVEHPGLDQPLIVIWEPSPSGTLVIGVISGIAVFVVILFIGILFIILRKRQGSRGAMGHYVLAERE.

An N-terminal signal peptide occupies residues 1–22 (MGPRARPALLLLMLLQTAVLQG). The segment at 23–114 (RLLRSHSLHY…IMENHNHSKE (92 aa)) is alpha-1. Residues 23–306 (RLLRSHSLHY…WEPSPSGTLV (284 aa)) are Extracellular-facing. Residues N110, N130, and N234 are each glycosylated (N-linked (GlcNAc...) asparagine). Positions 115–205 (SHTLQVILGC…ELGRGVLDQQ (91 aa)) are alpha-2. Disulfide bonds link C124/C187 and C225/C282. Positions 206-297 (VPPLVKVTHH…GLDQPLIVIW (92 aa)) are alpha-3. Residues 207-298 (PPLVKVTHHV…LDQPLIVIWE (92 aa)) enclose the Ig-like C1-type domain. The segment at 298-306 (EPSPSGTLV) is connecting peptide. The helical transmembrane segment at 307–330 (IGVISGIAVFVVILFIGILFIILR) threads the bilayer. At 331 to 348 (KRQGSRGAMGHYVLAERE) the chain is on the cytoplasmic side.

This sequence belongs to the MHC class I family. In terms of assembly, binds TFR through the extracellular domain in a pH-dependent manner. Expressed in all tissues tested except brain.

The protein localises to the cell membrane. In terms of biological role, binds to transferrin receptor (TFR) and reduces its affinity for iron-loaded transferrin. In Homo sapiens (Human), this protein is Hereditary hemochromatosis protein (HFE).